Here is a 902-residue protein sequence, read N- to C-terminus: FSPIDRYNDNHTQETYEDREWENVYRSTHGVNCTGSCSWKDGIVTWEGQELNYPTTGPDMPDFEPRGASYSWYLYSANRGVLWSMWQEELQNNESPLDAWKSSWQEVNELIAASNVYTVKTYGPDRVAGFSPIPAMSMVSYASGARTPDAHFFTEVRVVSVSPDFAESTKLCDLWLAPKQGTDAAMALAMGHVMLREFHLDNPSDYFLNYCRQYTDFPFLVTLSKQKGDQFVADRAADLVDALGQENNPEWKPVLWNENTNDFATPHGTMGSRGKWNLEQRLEDEETGEKLSVLGIEDEIGTVRLQLADGSTALVTTVYDLTMANYGLERGLGGQEPKDFNDDVPFTPAWQEKITGVPRELIIQIAREFADNADKTHGRAVLNLVLLVGAQGVNGGGWAHYVGQEKLRPAEGWQTIAMAKHMNSTSYFYNHSSQWRYETVTAQELLSPMADKYQHHGDYNVLAARMGWLPSAPQLGTNPLRQAGMSPVDYTVKFAAEQPENGKNHPRNLFVWRSNLLGSSGKGHEYMLKYLLGTENGIQGKQGGVKPEEVEWKLSSTCLYSDIVLPTATWYEKDDMNTSDMHPFIHPLSAAVDPAWESKSDWDIFTSLSKKFSEVCVGHLGKETDVVTLPIQHDSAAELAQPLDVKDWKGECEPIPGKTMPQIHVVERDYPATYERFTSIGPLMEKGIAWNTQSEMDLLRAWAALSEFTGRDHTHLALNKEDEKFRDIQAQPRTVITSPAFTGSEKQSFYLDHDMMKDFGESLLVYRPPIDTRKSRPEVEGKEITLNYLTPHNKGGPIVWISETDARDLGIEDNDWIEVFNSNGALTARVPAGMTMMYHAQERGGIHNSVTRPTHMIGGYAQLAYGFNYYGTVGSNRDEFVVVRNINWLDGEGNDQVQESVK.

His-29, Cys-33, and Cys-37 together coordinate [4Fe-4S] cluster.

It belongs to the prokaryotic molybdopterin-containing oxidoreductase family. In terms of assembly, heterotrimer composed of an alpha, a beta and a gamma chain. Alpha and beta are catalytic chains; gamma chains are involved in binding the enzyme complex to the cytoplasmic membrane. Requires [4Fe-4S] cluster as cofactor. It depends on Mo-bis(molybdopterin guanine dinucleotide) as a cofactor.

The protein resides in the cell membrane. The protein localises to the cytoplasm. The enzyme catalyses nitrate + a quinol = a quinone + nitrite + H2O. With respect to regulation, inhibited by micromolar concentrations of azide. Its function is as follows. The nitrate reductase enzyme complex allows Bradyrhizobium sp. USDA 3045 to use nitrate as an electron acceptor during anaerobic growth. The alpha chain is the actual site of nitrate reduction. This Bradyrhizobium sp protein is Respiratory nitrate reductase alpha chain (narG).